We begin with the raw amino-acid sequence, 257 residues long: Probable transcriptional regulatory protein SRU_2667 (257 aa).

Positions 1–15 (MAGHTRKWAKVKRKK) are enriched in basic residues. A disordered region spans residues 1-25 (MAGHTRKWAKVKRKKQKDDRRKSKV).

The protein belongs to the TACO1 family.

The protein resides in the cytoplasm. This is Probable transcriptional regulatory protein SRU_2667 from Salinibacter ruber (strain DSM 13855 / M31).